A 32-amino-acid polypeptide reads, in one-letter code: MIFTKINVIFIKNPNRKKKKCKIVNVNITMGF.

This is an uncharacterized protein from Saccharolobus islandicus (Sulfolobus islandicus).